Consider the following 441-residue polypeptide: Lysine histidine transporter 2 (441 aa).

Residues 1 to 32 are Cytoplasmic-facing; that stretch reads MGNSEMSASEVAAAKQKNVDDWLPITSSRNAK. Residues 33–53 form a helical membrane-spanning segment; sequence WWYSAFHNVTAMVGAGVLSLP. Residues 54-58 are Extracellular-facing; that stretch reads YAMSN. A helical membrane pass occupies residues 59 to 79; the sequence is LGWGPGVTIMVMSWIITLYTL. At 80 to 110 the chain is on the cytoplasmic side; it reads WQMVEMHEIVPGKRLDRYHELGQHAFGEKLG. Residues 111 to 131 traverse the membrane as a helical segment; it reads LWIVVPQQLIVEVGVDIVYMV. The Extracellular portion of the chain corresponds to 132–152; that stretch reads TGGASLKKVHQLVCPDCKEIR. A helical membrane pass occupies residues 153–173; it reads TTFWIMIFASVHFVISHLPNF. The Cytoplasmic segment spans residues 174-175; it reads NS. Residues 176–196 traverse the membrane as a helical segment; the sequence is ISIISLAAAVMSLTYSTIAWA. The Extracellular portion of the chain corresponds to 197–222; the sequence is ASVHKGVHPDVDYSPRASTDVGKVFN. A helical membrane pass occupies residues 223–243; that stretch reads FLNALGDVAFAYAGHNVVLEI. The Cytoplasmic portion of the chain corresponds to 244-263; it reads QATIPSTPEMPSKVPMWRGV. Residues 264-284 traverse the membrane as a helical segment; that stretch reads IVAYIVVAICYFPVAFLGYYI. Over 285–300 the chain is Extracellular; sequence FGNSVDDNILITLEKP. The chain crosses the membrane as a helical span at residues 301–321; that stretch reads IWLIAMANMFVVIHVIGSYQI. Topologically, residues 322 to 347 are cytoplasmic; that stretch reads FAMPVFDMLETVLVKKMNFNPSFKLR. The chain crosses the membrane as a helical span at residues 348 to 370; sequence FITRSLYVAFTMIVAICVPFFGG. Topologically, residues 371 to 373 are extracellular; that stretch reads LLG. A helical membrane pass occupies residues 374-396; the sequence is FFGGFAFAPTTYYLPCIMWLVLK. At 397–406 the chain is on the cytoplasmic side; it reads KPKRFGLSWT. The chain crosses the membrane as a helical span at residues 407-427; that stretch reads ANWFCIIVGVLLTILAPIGGL. The Extracellular portion of the chain corresponds to 428 to 441; sequence RTIIINAKTYKFFS.

The protein belongs to the amino acid/polyamine transporter 2 family. Amino acid/auxin permease (AAAP) (TC 2.A.18.2) subfamily. As to expression, expressed in flower buds and to lower levels in leaves and stems. Not detected in roots and siliques. Restricted to the tapetum cell layer.

The protein resides in the cell membrane. Inhibited by diethylstibestrol (DES), 2,4-dinitrophenol (DNP) and carbonlycyanide m-chlorophenylhydrazone (CCCP). Its function is as follows. Amino acid-proton symporter. Transporter with a broad specificity for neutral and acidic amino acids. Basic amino acids are only marginally transported. Involved in import of amino acids into the tapetum cells for synthesis of compounds important for microspore structure. In Arabidopsis thaliana (Mouse-ear cress), this protein is Lysine histidine transporter 2 (LHT2).